The chain runs to 272 residues: Ribosomal RNA small subunit methyltransferase A (272 aa).

6 residues coordinate S-adenosyl-L-methionine: asparagine 16, leucine 18, glycine 43, glutamate 64, aspartate 89, and asparagine 110.

It belongs to the class I-like SAM-binding methyltransferase superfamily. rRNA adenine N(6)-methyltransferase family. RsmA subfamily.

It localises to the cytoplasm. It carries out the reaction adenosine(1518)/adenosine(1519) in 16S rRNA + 4 S-adenosyl-L-methionine = N(6)-dimethyladenosine(1518)/N(6)-dimethyladenosine(1519) in 16S rRNA + 4 S-adenosyl-L-homocysteine + 4 H(+). Functionally, specifically dimethylates two adjacent adenosines (A1518 and A1519) in the loop of a conserved hairpin near the 3'-end of 16S rRNA in the 30S particle. May play a critical role in biogenesis of 30S subunits. The sequence is that of Ribosomal RNA small subunit methyltransferase A from Pseudomonas fluorescens (strain Pf0-1).